The primary structure comprises 354 residues: Neutral protease 2 homolog MEP3 (354 aa).

The first 19 residues, 1 to 19, serve as a signal peptide directing secretion; sequence MHFTSSLLALVALTTQALA. Residues 20 to 179 constitute a propeptide that is removed on maturation; the sequence is FPLNDLPKRD…QSAIPKLEKR (160 aa). Disulfide bonds link cysteine 186/cysteine 256 and cysteine 263/cysteine 281. Histidine 305 contacts Zn(2+). The active site involves glutamate 306. 2 residues coordinate Zn(2+): histidine 309 and aspartate 320.

It belongs to the peptidase M35 family. It depends on Zn(2+) as a cofactor.

It localises to the secreted. The catalysed reaction is Preferential cleavage of bonds with hydrophobic residues in P1'. Also 3-Asn-|-Gln-4 and 8-Gly-|-Ser-9 bonds in insulin B chain.. Secreted metalloproteinase that allows assimilation of proteinaceous substrates. Shows high activities on basic nuclear substrates such as histone and protamine. May be involved in virulence. The sequence is that of Neutral protease 2 homolog MEP3 (MEP3) from Coccidioides posadasii (strain C735) (Valley fever fungus).